The sequence spans 862 residues: Probable alpha,alpha-trehalose-phosphate synthase [UDP-forming] 11 (862 aa).

At S5 the chain carries Phosphoserine. Positions 50 to 538 are glycosyltransferase; that stretch reads PKRIVVSNQL…ARSYDQDLQR (489 aa). A disordered region spans residues 838–862; the sequence is SKHEQQKKQSKFTFQQPMGQCRKKA.

In the N-terminal section; belongs to the glycosyltransferase 20 family. It in the C-terminal section; belongs to the trehalose phosphatase family. In terms of tissue distribution, expressed in leaves, roots, stems and flowers.

It catalyses the reaction D-glucose 6-phosphate + UDP-alpha-D-glucose = alpha,alpha-trehalose 6-phosphate + UDP + H(+). The sequence is that of Probable alpha,alpha-trehalose-phosphate synthase [UDP-forming] 11 (TPS11) from Arabidopsis thaliana (Mouse-ear cress).